The following is an 81-amino-acid chain: Large ribosomal subunit protein bL28 (81 aa).

This sequence belongs to the bacterial ribosomal protein bL28 family.

In Gloeobacter violaceus (strain ATCC 29082 / PCC 7421), this protein is Large ribosomal subunit protein bL28.